Reading from the N-terminus, the 223-residue chain is Membrane-associated progesterone receptor component 2 (223 aa).

The segment at 1–33 is disordered; the sequence is MAAGDGDVKLGTLGSGSESSNDGGSESPGDAGA. O-linked (Xyl...) (chondroitin sulfate) serine glycosylation occurs at S15. Positions 15-33 are enriched in low complexity; sequence SGSESSNDGGSESPGDAGA. Residues 42 to 66 traverse the membrane as a helical segment; that stretch reads AAALALLTGGGEMLLNVALVALVLL. Phosphoserine is present on residues S90, S104, and S208. Residues 102-201 form the Cytochrome b5 heme-binding domain; it reads DFSLEQLRQY…EKYDYVGRLL (100 aa). The segment at 202-223 is disordered; sequence KPGEEPSEYTDEEDTKDHNKQD. A compositionally biased stretch (acidic residues) spans 206 to 215; sequence EPSEYTDEED. Phosphotyrosine is present on Y210. Residue T211 is modified to Phosphothreonine.

Belongs to the cytochrome b5 family. MAPR subfamily. In terms of assembly, interacts with PGRMC1. Interacts with AAAS. As to expression, expressed by endometrial glands and stroma (at protein level). Detected in urine (at protein level).

The protein resides in the membrane. The protein localises to the nucleus envelope. Its subcellular location is the endoplasmic reticulum. It localises to the secreted. Required for the maintenance of uterine histoarchitecture and normal female reproductive lifespan. May serve as a universal non-classical progesterone receptor in the uterus. Intracellular heme chaperone required for delivery of labile, or signaling heme, to the nucleus. Plays a role in adipocyte function and systemic glucose homeostasis. In brown fat, which has a high demand for heme, delivery of labile heme in the nucleus regulates the activity of heme-responsive transcriptional repressors such as NR1D1 and BACH1. In Homo sapiens (Human), this protein is Membrane-associated progesterone receptor component 2.